We begin with the raw amino-acid sequence, 70 residues long: Translation initiation factor IF-1 (70 aa).

Residues 1–70 (MKETNLSIKG…LTKGRIIYRH (70 aa)) form the S1-like domain.

The protein belongs to the IF-1 family. Component of the 30S ribosomal translation pre-initiation complex which assembles on the 30S ribosome in the order IF-2 and IF-3, IF-1 and N-formylmethionyl-tRNA(fMet); mRNA recruitment can occur at any time during PIC assembly.

The protein localises to the cytoplasm. Its function is as follows. One of the essential components for the initiation of protein synthesis. Stabilizes the binding of IF-2 and IF-3 on the 30S subunit to which N-formylmethionyl-tRNA(fMet) subsequently binds. Helps modulate mRNA selection, yielding the 30S pre-initiation complex (PIC). Upon addition of the 50S ribosomal subunit IF-1, IF-2 and IF-3 are released leaving the mature 70S translation initiation complex. This chain is Translation initiation factor IF-1, found in Mycoplasmoides gallisepticum (strain R(low / passage 15 / clone 2)) (Mycoplasma gallisepticum).